The following is a 58-amino-acid chain: uncharacterized protein (58 aa).

A helical transmembrane segment spans residues 12–32 (VALVYISVYFFSCISLIVYFF).

It is found in the membrane. This is an uncharacterized protein from Saccharomyces cerevisiae (strain ATCC 204508 / S288c) (Baker's yeast).